The primary structure comprises 274 residues: D-aminopeptidase (274 aa).

Zn(2+) is bound by residues D8, E10, H60, and H104. Catalysis depends on H115, which acts as the Nucleophile. E133 lines the Zn(2+) pocket.

The protein belongs to the peptidase M55 family. Homodecamer. A 20 Angstroms wide channel runs through the complex, giving access to a central chamber holding the active sites. It depends on Zn(2+) as a cofactor.

Hydrolyzes N-terminal residues in D-amino acid containing peptides. Among the tested substrates, the highest activities are with D-Ala-D-Ala and D-Ala-Gly-Gly. The physiological role is not clear. The protein is D-aminopeptidase (dppA) of Bacillus subtilis (strain 168).